Here is a 310-residue protein sequence, read N- to C-terminus: Aspartate carbamoyltransferase catalytic subunit (310 aa).

2 residues coordinate carbamoyl phosphate: Arg-60 and Thr-61. L-aspartate is bound at residue Lys-88. Arg-110, His-138, and Gln-141 together coordinate carbamoyl phosphate. L-aspartate-binding residues include Arg-171 and Arg-225. Gly-266 and Pro-267 together coordinate carbamoyl phosphate.

Belongs to the aspartate/ornithine carbamoyltransferase superfamily. ATCase family. Heterododecamer (2C3:3R2) of six catalytic PyrB chains organized as two trimers (C3), and six regulatory PyrI chains organized as three dimers (R2).

The catalysed reaction is carbamoyl phosphate + L-aspartate = N-carbamoyl-L-aspartate + phosphate + H(+). The protein operates within pyrimidine metabolism; UMP biosynthesis via de novo pathway; (S)-dihydroorotate from bicarbonate: step 2/3. Catalyzes the condensation of carbamoyl phosphate and aspartate to form carbamoyl aspartate and inorganic phosphate, the committed step in the de novo pyrimidine nucleotide biosynthesis pathway. The sequence is that of Aspartate carbamoyltransferase catalytic subunit from Christiangramia forsetii (strain DSM 17595 / CGMCC 1.15422 / KT0803) (Gramella forsetii).